Reading from the N-terminus, the 573-residue chain is ATP-dependent RNA helicase RhlB (573 aa).

The Q motif signature appears at 9 to 37 (VTFSSFDLHPALIAGLESAGFTRCTPIQA). Residues 40–220 (LPVALPGGDV…YEHMNEPEKL (181 aa)) form the Helicase ATP-binding domain. Residue 53 to 60 (AQTGTGKT) participates in ATP binding. Positions 166-169 (DEAD) match the DEAD box motif. Positions 231–393 (RVRQRIYFPS…PVTSELLTPL (163 aa)) constitute a Helicase C-terminal domain. Residues 391–560 (TPLPRAPRVP…KPSGSPSLLS (170 aa)) form a disordered region. The segment covering 402–411 (EGEEADDDAG) has biased composition (acidic residues). Positions 419–432 (REAREQRAAEEQRR) are enriched in basic and acidic residues. Positions 435-450 (GRSGSGGSRSGSGGGG) are enriched in gly residues. The segment covering 451-462 (GRREGAGADGKP) has biased composition (basic and acidic residues). Residues 484 to 499 (PVVAAAAGQAPSAGVA) show a composition bias toward low complexity. Basic residues predominate over residues 505–514 (PRKRRRRRNG). Residues 541–560 (VVAKPVRAAAKPSGSPSLLS) show a composition bias toward low complexity.

It belongs to the DEAD box helicase family. RhlB subfamily. In terms of assembly, component of the RNA degradosome, which is a multiprotein complex involved in RNA processing and mRNA degradation.

It is found in the cytoplasm. It carries out the reaction ATP + H2O = ADP + phosphate + H(+). Its function is as follows. DEAD-box RNA helicase involved in RNA degradation. Has RNA-dependent ATPase activity and unwinds double-stranded RNA. In Xanthomonas euvesicatoria pv. vesicatoria (strain 85-10) (Xanthomonas campestris pv. vesicatoria), this protein is ATP-dependent RNA helicase RhlB.